Reading from the N-terminus, the 288-residue chain is Hypersensitive-induced response protein-like protein 1 (288 aa).

Glycine 2 carries N-myristoyl glycine lipidation.

Functionally, positive regulator of hypersensitive response (HR)-like cell death. May be involved in potassium ion channel regulation. This is Hypersensitive-induced response protein-like protein 1 from Oryza sativa subsp. japonica (Rice).